Reading from the N-terminus, the 343-residue chain is Membrane progestin receptor delta (343 aa).

Topologically, residues 1 to 49 are cytoplasmic; sequence MLSLKMPQLLRVHQVPRVFWEEGIMSGYRCPTSSALDCVLSSFQMTNET. A helical transmembrane segment spans residues 50–70; it reads VNIWTHFLPTWYFLWRLLALG. Residues 71-79 are Extracellular-facing; sequence SPGFRADPY. Residues 80-100 traverse the membrane as a helical segment; the sequence is HLPLLVFLLPACLYPFASCCA. Residues 101–112 are Cytoplasmic-facing; sequence HTFSSMSPRARH. Residues 113-133 traverse the membrane as a helical segment; the sequence is ICYFLDYGALSLYSLGCAFPY. Over 134–146 the chain is Extracellular; it reads AAYSMPASWLHSR. The helical transmembrane segment at 147 to 167 threads the bilayer; that stretch reads LHQLFVPAAALNSFLCTGLSC. The Cytoplasmic portion of the chain corresponds to 168 to 216; the sequence is YSRFPELEYPGFSKALRTAAFAYPFLFDNLPLFYRLRLCWGGAHSCGRD. Residues 217-237 form a helical membrane-spanning segment; that stretch reads ALSSNHGYHLLCALLSGFLFA. Topologically, residues 238–257 are extracellular; it reads ARLPERLAPGRFDYIGHSHQ. Residues 258–278 form a helical membrane-spanning segment; that stretch reads LFHICAVLGTHFQLEAVLADM. Residues 279–291 are Cytoplasmic-facing; it reads GSRRAWLAVQEPT. The helical transmembrane segment at 292–312 threads the bilayer; sequence LGLGATVATLSLAVIGNLFII. At 313-343 the chain is on the extracellular side; that stretch reads AAFTASLLRMPGPCPLLQGSPLEEGLQAKQQ.

It belongs to the ADIPOR family. Homodimer.

It is found in the cell membrane. Functionally, plasma membrane progesterone (P4) receptor coupled to G proteins. Seems to act through a G(s) mediated pathway. Involved in neurosteroid inhibition of apoptosis. May be involved in regulating rapid P4 signaling in the nervous system. Also binds dehydroepiandrosterone (DHEA), pregnanolone, pregnenolone and allopregnanolone. The polypeptide is Membrane progestin receptor delta (Mus musculus (Mouse)).